A 396-amino-acid chain; its full sequence is Phosphopentomutase (396 aa).

Positions 13, 288, 293, 329, 330, and 341 each coordinate Mn(2+).

This sequence belongs to the phosphopentomutase family. Mn(2+) serves as cofactor.

Its subcellular location is the cytoplasm. The enzyme catalyses 2-deoxy-alpha-D-ribose 1-phosphate = 2-deoxy-D-ribose 5-phosphate. It catalyses the reaction alpha-D-ribose 1-phosphate = D-ribose 5-phosphate. It functions in the pathway carbohydrate degradation; 2-deoxy-D-ribose 1-phosphate degradation; D-glyceraldehyde 3-phosphate and acetaldehyde from 2-deoxy-alpha-D-ribose 1-phosphate: step 1/2. In terms of biological role, isomerase that catalyzes the conversion of deoxy-ribose 1-phosphate (dRib-1-P) and ribose 1-phosphate (Rib-1-P) to deoxy-ribose 5-phosphate (dRib-5-P) and ribose 5-phosphate (Rib-5-P), respectively. This Clostridium perfringens (strain 13 / Type A) protein is Phosphopentomutase.